Consider the following 336-residue polypeptide: Nuclear egress protein 2 (336 aa).

Topologically, residues 1–315 (MASPEERLLD…AWRYSWRATP (315 aa)) are perinuclear space. Disordered regions lie at residues 193–221 (RSGQ…GCLG) and 277–297 (RTRE…VPPE). Positions 277–288 (RTRETRRMRGSH) are enriched in basic residues. Residues 316-333 (YLARVLAVTAVALLLMFL) traverse the membrane as a helical segment. Topologically, residues 334–336 (RWT) are nuclear.

This sequence belongs to the herpesviridae NEC2 protein family. Forms a heterodimeric viral nuclear egress complex (NEC) with NEC1. Interacts with host IKBKE; this interaction inhibits host IKBKE kinase activity and IRF3 nuclear translocation. Post-translationally, phosphorylated.

The protein resides in the host nucleus inner membrane. It localises to the host cytoplasm. The protein localises to the host perinuclear region. Plays an essential role in virion nuclear egress, the first step of virion release from infected cell. Within the host nucleus, NEC1 interacts with the newly formed capsid through the vertexes and directs it to the inner nuclear membrane by associating with NEC2. Induces the budding of the capsid at the inner nuclear membrane as well as its envelopment into the perinuclear space. There, the NEC1/NEC2 complex promotes the fusion of the enveloped capsid with the outer nuclear membrane and the subsequent release of the viral capsid into the cytoplasm where it will reach the secondary budding sites in the host Golgi or trans-Golgi network. Inhibits host IKBKE and IRF3, thereby impairing type I IFN signaling. This is Nuclear egress protein 2 from Homo sapiens (Human).